We begin with the raw amino-acid sequence, 283 residues long: Serine/threonine-protein phosphatase Pgam5, mitochondrial (283 aa).

The helical transmembrane segment at 7–23 (MYGLPSAAVAVGTALLN) threads the bilayer.

It belongs to the phosphoglycerate mutase family. BPG-dependent PGAM subfamily. As to quaternary structure, interacts with skn-1.

It is found in the mitochondrion outer membrane. It carries out the reaction O-phospho-L-seryl-[protein] + H2O = L-seryl-[protein] + phosphate. The catalysed reaction is O-phospho-L-threonyl-[protein] + H2O = L-threonyl-[protein] + phosphate. Displays phosphatase activity for serine/threonine residues. Has apparently no phosphoglycerate mutase activity. The polypeptide is Serine/threonine-protein phosphatase Pgam5, mitochondrial (pgam-5) (Caenorhabditis briggsae).